The following is a 309-amino-acid chain: tRNA dimethylallyltransferase (309 aa).

10–17 contributes to the ATP binding site; the sequence is GPTAVGKT. 12-17 contributes to the substrate binding site; the sequence is TAVGKT. The segment at 35–38 is interaction with substrate tRNA; it reads DSMQ.

This sequence belongs to the IPP transferase family. In terms of assembly, monomer. Mg(2+) serves as cofactor.

It carries out the reaction adenosine(37) in tRNA + dimethylallyl diphosphate = N(6)-dimethylallyladenosine(37) in tRNA + diphosphate. Functionally, catalyzes the transfer of a dimethylallyl group onto the adenine at position 37 in tRNAs that read codons beginning with uridine, leading to the formation of N6-(dimethylallyl)adenosine (i(6)A). This Clostridium botulinum (strain Alaska E43 / Type E3) protein is tRNA dimethylallyltransferase.